Consider the following 566-residue polypeptide: Urease subunit alpha (566 aa).

Residues 128–566 (GGIDTHIHFI…LPMAQRYFLF (439 aa)) form the Urease domain. The Ni(2+) site is built by H133, H135, and K216. K216 is modified (N6-carboxylysine). Substrate is bound at residue H218. Ni(2+) is bound by residues H245 and H271. The active-site Proton donor is H319. Ni(2+) is bound at residue D359.

Belongs to the metallo-dependent hydrolases superfamily. Urease alpha subunit family. Heterotrimer of UreA (gamma), UreB (beta) and UreC (alpha) subunits. Three heterotrimers associate to form the active enzyme. Ni cation is required as a cofactor. Carboxylation allows a single lysine to coordinate two nickel ions.

The protein localises to the cytoplasm. The enzyme catalyses urea + 2 H2O + H(+) = hydrogencarbonate + 2 NH4(+). Its pathway is nitrogen metabolism; urea degradation; CO(2) and NH(3) from urea (urease route): step 1/1. The protein is Urease subunit alpha of Pseudomonas fluorescens (strain Pf0-1).